The primary structure comprises 363 residues: Putative dipeptidase YkvY (363 aa).

5 residues coordinate Mn(2+): aspartate 222, aspartate 233, histidine 297, glutamate 326, and glutamate 340.

It belongs to the peptidase M24B family. The cofactor is Mn(2+).

The polypeptide is Putative dipeptidase YkvY (ykvY) (Bacillus subtilis (strain 168)).